The sequence spans 1814 residues: U3 small nucleolar RNA-associated protein 10 (1814 aa).

An HEAT 1 repeat occupies 583 to 620 (LDFQALLPFLLVALTDASERVRREAAAALAAVGSLYKK). The next 2 helical transmembrane spans lie at 942-962 (IQSG…AIVN) and 998-1018 (ALLL…HSVM). HEAT repeat units lie at residues 1042-1079 (QTID…AFEH), 1249-1286 (LTLV…QNPE), 1293-1331 (IRVL…KYGK), and 1770-1807 (ALLP…VLGE).

The protein belongs to the HEATR1/UTP10 family. As to quaternary structure, component of the ribosomal small subunit (SSU) processome.

It is found in the nucleus. It localises to the nucleolus. The protein resides in the membrane. In terms of biological role, involved in nucleolar processing of pre-18S ribosomal RNA. Involved in ribosome biosynthesis. The chain is U3 small nucleolar RNA-associated protein 10 from Neosartorya fischeri (strain ATCC 1020 / DSM 3700 / CBS 544.65 / FGSC A1164 / JCM 1740 / NRRL 181 / WB 181) (Aspergillus fischerianus).